Reading from the N-terminus, the 404-residue chain is Argininosuccinate synthase (404 aa).

Residues 10–18 (AFSGGLDTS) and alanine 37 each bind ATP. L-citrulline is bound by residues tyrosine 88 and serine 93. Glycine 118 contributes to the ATP binding site. L-aspartate-binding residues include threonine 120, asparagine 124, and aspartate 125. Asparagine 124 lines the L-citrulline pocket. L-citrulline-binding residues include arginine 128, serine 179, serine 188, glutamate 264, and tyrosine 276.

This sequence belongs to the argininosuccinate synthase family. Type 1 subfamily. As to quaternary structure, homotetramer.

It localises to the cytoplasm. The enzyme catalyses L-citrulline + L-aspartate + ATP = 2-(N(omega)-L-arginino)succinate + AMP + diphosphate + H(+). The protein operates within amino-acid biosynthesis; L-arginine biosynthesis; L-arginine from L-ornithine and carbamoyl phosphate: step 2/3. This is Argininosuccinate synthase from Nitrosomonas europaea (strain ATCC 19718 / CIP 103999 / KCTC 2705 / NBRC 14298).